Reading from the N-terminus, the 148-residue chain is UPF0756 membrane protein ETA_17460 (148 aa).

A run of 4 helical transmembrane segments spans residues Ala14–Ile34, Met51–Ile71, Phe80–Gly100, and Val112–Val132.

Belongs to the UPF0756 family.

The protein resides in the cell membrane. The chain is UPF0756 membrane protein ETA_17460 from Erwinia tasmaniensis (strain DSM 17950 / CFBP 7177 / CIP 109463 / NCPPB 4357 / Et1/99).